The sequence spans 40 residues: MVIAAMLVPFVAIRSHDMTTYLYWTAVTAAYLTYLTIKRW.

Residues Thr20 to Ile37 form a helical membrane-spanning segment.

Its subcellular location is the membrane. This is an uncharacterized protein from Archaeoglobus fulgidus (strain ATCC 49558 / DSM 4304 / JCM 9628 / NBRC 100126 / VC-16).